A 156-amino-acid polypeptide reads, in one-letter code: MPRKGYIAKREILPDPIYKNRVLTKFINQIMLDGKKGTAESICYNAFELIQEKTGKDPIEVFETALKNVMPVLEVKARRVGGANYQVPIEVRTDRRQTLGLRWLVGYARKRSEKTMEERIAGELMDAANNTGGSIKKKEDTHKMAEANKAFAHYRW.

The protein belongs to the universal ribosomal protein uS7 family. In terms of assembly, part of the 30S ribosomal subunit. Contacts proteins S9 and S11.

One of the primary rRNA binding proteins, it binds directly to 16S rRNA where it nucleates assembly of the head domain of the 30S subunit. Is located at the subunit interface close to the decoding center, probably blocks exit of the E-site tRNA. The sequence is that of Small ribosomal subunit protein uS7 from Desulfitobacterium hafniense (strain DSM 10664 / DCB-2).